A 353-amino-acid chain; its full sequence is Holliday junction branch migration complex subunit RuvB (353 aa).

Residues 1 to 183 (MNEPRIVAPQ…FGATYRLDFY (183 aa)) are large ATPase domain (RuvB-L). ATP-binding positions include Leu-22, Arg-23, Gly-64, Lys-67, Thr-68, Thr-69, 130 to 132 (EDF), Arg-173, Tyr-183, and Arg-220. Thr-68 contributes to the Mg(2+) binding site. The interval 184-254 (DTAALRAIVE…LARLALDQLA (71 aa)) is small ATPAse domain (RuvB-S). The head domain (RuvB-H) stretch occupies residues 257–353 (ELGLDEVDRL…HAASERSSDA (97 aa)). Residues Arg-312 and Arg-317 each contribute to the DNA site.

It belongs to the RuvB family. Homohexamer. Forms an RuvA(8)-RuvB(12)-Holliday junction (HJ) complex. HJ DNA is sandwiched between 2 RuvA tetramers; dsDNA enters through RuvA and exits via RuvB. An RuvB hexamer assembles on each DNA strand where it exits the tetramer. Each RuvB hexamer is contacted by two RuvA subunits (via domain III) on 2 adjacent RuvB subunits; this complex drives branch migration. In the full resolvosome a probable DNA-RuvA(4)-RuvB(12)-RuvC(2) complex forms which resolves the HJ.

It is found in the cytoplasm. It catalyses the reaction ATP + H2O = ADP + phosphate + H(+). Its function is as follows. The RuvA-RuvB-RuvC complex processes Holliday junction (HJ) DNA during genetic recombination and DNA repair, while the RuvA-RuvB complex plays an important role in the rescue of blocked DNA replication forks via replication fork reversal (RFR). RuvA specifically binds to HJ cruciform DNA, conferring on it an open structure. The RuvB hexamer acts as an ATP-dependent pump, pulling dsDNA into and through the RuvAB complex. RuvB forms 2 homohexamers on either side of HJ DNA bound by 1 or 2 RuvA tetramers; 4 subunits per hexamer contact DNA at a time. Coordinated motions by a converter formed by DNA-disengaged RuvB subunits stimulates ATP hydrolysis and nucleotide exchange. Immobilization of the converter enables RuvB to convert the ATP-contained energy into a lever motion, pulling 2 nucleotides of DNA out of the RuvA tetramer per ATP hydrolyzed, thus driving DNA branch migration. The RuvB motors rotate together with the DNA substrate, which together with the progressing nucleotide cycle form the mechanistic basis for DNA recombination by continuous HJ branch migration. Branch migration allows RuvC to scan DNA until it finds its consensus sequence, where it cleaves and resolves cruciform DNA. In Thermomicrobium roseum (strain ATCC 27502 / DSM 5159 / P-2), this protein is Holliday junction branch migration complex subunit RuvB.